A 425-amino-acid polypeptide reads, in one-letter code: Serine hydroxymethyltransferase (425 aa).

(6S)-5,6,7,8-tetrahydrofolate contacts are provided by residues Leu123 and 127–129 (GHL). An N6-(pyridoxal phosphate)lysine modification is found at Lys232. Position 248 (Glu248) interacts with (6S)-5,6,7,8-tetrahydrofolate.

Belongs to the SHMT family. Homodimer. The cofactor is pyridoxal 5'-phosphate.

The protein resides in the cytoplasm. The enzyme catalyses (6R)-5,10-methylene-5,6,7,8-tetrahydrofolate + glycine + H2O = (6S)-5,6,7,8-tetrahydrofolate + L-serine. It functions in the pathway one-carbon metabolism; tetrahydrofolate interconversion. The protein operates within amino-acid biosynthesis; glycine biosynthesis; glycine from L-serine: step 1/1. In terms of biological role, catalyzes the reversible interconversion of serine and glycine with tetrahydrofolate (THF) serving as the one-carbon carrier. This reaction serves as the major source of one-carbon groups required for the biosynthesis of purines, thymidylate, methionine, and other important biomolecules. Also exhibits THF-independent aldolase activity toward beta-hydroxyamino acids, producing glycine and aldehydes, via a retro-aldol mechanism. This chain is Serine hydroxymethyltransferase, found in Anaplasma phagocytophilum (strain HZ).